We begin with the raw amino-acid sequence, 289 residues long: Coiled-coil domain-containing protein 137 (289 aa).

Disordered stretches follow at residues 1 to 64 (MAGA…QEIP), 149 to 184 (EVQA…EKAA), and 204 to 225 (QPPE…GRRS). Residues 7 to 20 (GAAVSRVQAGPGSP) show a composition bias toward low complexity. Residue S19 is modified to Phosphoserine. Residues 155–197 (KEKSEQKKAKKAFQKRRLDKVRRKKEEKAADRLEQELLRDTVK) are a coiled coil. Over residues 162–177 (KAKKAFQKRRLDKVRR) the composition is skewed to basic residues. S233 carries the post-translational modification Phosphoserine. Residues 247 to 273 (RQRIVEEERERAVQAYRALKQRQQQLH) are a coiled coil. The disordered stretch occupies residues 265-289 (LKQRQQQLHGERPHLTSRKKPEPQL). Positions 273 to 289 (HGERPHLTSRKKPEPQL) are enriched in basic and acidic residues.

The protein resides in the chromosome. The polypeptide is Coiled-coil domain-containing protein 137 (CCDC137) (Homo sapiens (Human)).